Consider the following 111-residue polypeptide: MPRKITSYKTSLQGLREENEDVELMNLNLLLTGKPNNPKYAPIDLFIVCDGHGGKEVAEYVAPRLNRYIMNNNNTFPLHRQHVAKIYDAIQNELIGKGIARTWWMYCSSYY.

Positions 3-29 (RKITSYKTSLQGLREENEDVELMNLNL) form a coiled coil. The 106-residue stretch at 6–111 (TSYKTSLQGL…TWWMYCSSYY (106 aa)) folds into the PPM-type phosphatase domain.

This is an uncharacterized protein from Acanthamoeba polyphaga mimivirus (APMV).